Reading from the N-terminus, the 360-residue chain is DNA replication and repair protein RecF (360 aa).

30–37 (GDNAQGKT) is an ATP binding site.

The protein belongs to the RecF family.

It is found in the cytoplasm. Its function is as follows. The RecF protein is involved in DNA metabolism; it is required for DNA replication and normal SOS inducibility. RecF binds preferentially to single-stranded, linear DNA. It also seems to bind ATP. The polypeptide is DNA replication and repair protein RecF (Lachnoclostridium phytofermentans (strain ATCC 700394 / DSM 18823 / ISDg) (Clostridium phytofermentans)).